Here is a 176-residue protein sequence, read N- to C-terminus: ATP-dependent protease subunit HslV (176 aa).

Thr-5 is an active-site residue. Residues Ser-161, Cys-164, and Thr-167 each coordinate Na(+).

The protein belongs to the peptidase T1B family. HslV subfamily. As to quaternary structure, a double ring-shaped homohexamer of HslV is capped on each side by a ring-shaped HslU homohexamer. The assembly of the HslU/HslV complex is dependent on binding of ATP.

It localises to the cytoplasm. The catalysed reaction is ATP-dependent cleavage of peptide bonds with broad specificity.. Allosterically activated by HslU binding. In terms of biological role, protease subunit of a proteasome-like degradation complex believed to be a general protein degrading machinery. This chain is ATP-dependent protease subunit HslV, found in Caldanaerobacter subterraneus subsp. tengcongensis (strain DSM 15242 / JCM 11007 / NBRC 100824 / MB4) (Thermoanaerobacter tengcongensis).